Consider the following 812-residue polypeptide: Eukaryotic translation initiation factor 3 subunit C (812 aa).

Positions 1 to 105 are disordered; that stretch reads MSRFFSRGYH…SDESDDEGKK (105 aa). Acidic residues-rich tracts occupy residues 17-40 and 48-59; these read SEDEELLTSSEEELMSSSEEEVVS and SESESAESDDDS. One can recognise a PCI domain in the interval 607-783; sequence FHQHINLDLI…EMLIFDKGDE (177 aa).

This sequence belongs to the eIF-3 subunit C family. Component of the eukaryotic translation initiation factor 3 (eIF-3) complex.

Its subcellular location is the cytoplasm. In terms of biological role, component of the eukaryotic translation initiation factor 3 (eIF-3) complex, which is involved in protein synthesis of a specialized repertoire of mRNAs and, together with other initiation factors, stimulates binding of mRNA and methionyl-tRNAi to the 40S ribosome. The eIF-3 complex specifically targets and initiates translation of a subset of mRNAs involved in cell proliferation. The chain is Eukaryotic translation initiation factor 3 subunit C from Eremothecium gossypii (strain ATCC 10895 / CBS 109.51 / FGSC 9923 / NRRL Y-1056) (Yeast).